We begin with the raw amino-acid sequence, 403 residues long: 4-hydroxy-3-methylbut-2-en-1-yl diphosphate synthase (flavodoxin) (403 aa).

Basic and acidic residues predominate over residues 1 to 16 (MNTENPIEKPFRKTGD). The tract at residues 1–31 (MNTENPIEKPFRKTGDPVDLTSESPLHPRRK) is disordered. [4Fe-4S] cluster is bound by residues Cys291, Cys294, Cys326, and Glu333.

The protein belongs to the IspG family. [4Fe-4S] cluster is required as a cofactor.

It carries out the reaction (2E)-4-hydroxy-3-methylbut-2-enyl diphosphate + oxidized [flavodoxin] + H2O + 2 H(+) = 2-C-methyl-D-erythritol 2,4-cyclic diphosphate + reduced [flavodoxin]. It functions in the pathway isoprenoid biosynthesis; isopentenyl diphosphate biosynthesis via DXP pathway; isopentenyl diphosphate from 1-deoxy-D-xylulose 5-phosphate: step 5/6. In terms of biological role, converts 2C-methyl-D-erythritol 2,4-cyclodiphosphate (ME-2,4cPP) into 1-hydroxy-2-methyl-2-(E)-butenyl 4-diphosphate. This is 4-hydroxy-3-methylbut-2-en-1-yl diphosphate synthase (flavodoxin) from Bifidobacterium longum (strain NCC 2705).